A 235-amino-acid polypeptide reads, in one-letter code: 2-C-methyl-D-erythritol 4-phosphate cytidylyltransferase (235 aa).

It belongs to the IspD/TarI cytidylyltransferase family. IspD subfamily.

It catalyses the reaction 2-C-methyl-D-erythritol 4-phosphate + CTP + H(+) = 4-CDP-2-C-methyl-D-erythritol + diphosphate. It participates in isoprenoid biosynthesis; isopentenyl diphosphate biosynthesis via DXP pathway; isopentenyl diphosphate from 1-deoxy-D-xylulose 5-phosphate: step 2/6. In terms of biological role, catalyzes the formation of 4-diphosphocytidyl-2-C-methyl-D-erythritol from CTP and 2-C-methyl-D-erythritol 4-phosphate (MEP). The polypeptide is 2-C-methyl-D-erythritol 4-phosphate cytidylyltransferase (Pseudomonas putida (strain ATCC 700007 / DSM 6899 / JCM 31910 / BCRC 17059 / LMG 24140 / F1)).